A 328-amino-acid chain; its full sequence is DNA-directed RNA polymerase subunit alpha (328 aa).

The alpha N-terminal domain (alpha-NTD) stretch occupies residues 1–232 (MSTQGFLKPR…DQISVFAALE (232 aa)). Positions 248 to 328 (IDPVLLRPVD…NWPPLGLERP (81 aa)) are alpha C-terminal domain (alpha-CTD).

It belongs to the RNA polymerase alpha chain family. Homodimer. The RNAP catalytic core consists of 2 alpha, 1 beta, 1 beta' and 1 omega subunit. When a sigma factor is associated with the core the holoenzyme is formed, which can initiate transcription.

It catalyses the reaction RNA(n) + a ribonucleoside 5'-triphosphate = RNA(n+1) + diphosphate. DNA-dependent RNA polymerase catalyzes the transcription of DNA into RNA using the four ribonucleoside triphosphates as substrates. This chain is DNA-directed RNA polymerase subunit alpha, found in Bordetella bronchiseptica (strain ATCC BAA-588 / NCTC 13252 / RB50) (Alcaligenes bronchisepticus).